Reading from the N-terminus, the 457-residue chain is UDP-N-acetylmuramoylalanine--D-glutamate ligase (457 aa).

Position 117 to 123 (117 to 123 (GTNGKST)) interacts with ATP.

It belongs to the MurCDEF family.

The protein localises to the cytoplasm. It carries out the reaction UDP-N-acetyl-alpha-D-muramoyl-L-alanine + D-glutamate + ATP = UDP-N-acetyl-alpha-D-muramoyl-L-alanyl-D-glutamate + ADP + phosphate + H(+). It functions in the pathway cell wall biogenesis; peptidoglycan biosynthesis. Its function is as follows. Cell wall formation. Catalyzes the addition of glutamate to the nucleotide precursor UDP-N-acetylmuramoyl-L-alanine (UMA). This Paramagnetospirillum magneticum (strain ATCC 700264 / AMB-1) (Magnetospirillum magneticum) protein is UDP-N-acetylmuramoylalanine--D-glutamate ligase.